A 587-amino-acid polypeptide reads, in one-letter code: FAD-dependent monooxygenase ankC (587 aa).

The chain crosses the membrane as a helical span at residues 7–27 (AVDVLIIGAGPAGLIAAMWMA). 2 residues coordinate FAD: tyrosine 245 and aspartate 311.

It belongs to the PheA/TfdB FAD monooxygenase family. In terms of assembly, homodimer. Requires FAD as cofactor.

The protein resides in the membrane. It carries out the reaction cyclo(L-arginyl-L-dehydrotyrosyl) + AH2 + O2 = cyclo(L-arginyl-(Z)-dehydro-3,4-dihydroxytyrosyl) + A + H2O. The protein operates within secondary metabolite biosynthesis. Functionally, FAD-dependent monooxygenase; part of the ank cluster that mediates the biosynthesis of NK13650 C, a highly modified cyclo-arginine-tyrosine dipeptide. AnkC uses as substrate the dehydro-cyclodipeptide intermediate generated by the monooxygase ankB and acts as a hydroxylase that installs the m-OH through a canonical flavin-dependent aromatic hydroxylation mechanism. Within the pathway, the cyclodipeptide synthase ankA acts as the scaffold-generating enzyme and is responsible for formation of the cyclo-Arg-Tyr diketopiperazine (cRY) from L-Arg and L-Tyr. The ankA product cRY is desaturated by the cytochrome P450 monooxygenase ankB to yield a dehydro-cyclodipeptide intermediate. The FAD-dependent monooxygenase ankC then installs the m-OH, ankD catalyzes the attachment of L-homoserine, and ankE ligates citrate to the ankD product to yield NK13650 B. The O-methyltransferase ankF is responsible for methylation of the C-17 phenol group of NK13650 B to produce NK13650 D. Amidation of NK13650 D with L-Asp by ankG then leads to the production of NK13650 C, whereas amidation of NK13650 B produces NK13650 A. In Aspergillus thermomutatus (Neosartorya pseudofischeri), this protein is FAD-dependent monooxygenase ankC.